A 183-amino-acid polypeptide reads, in one-letter code: MKKKTSLSEEDQALFRQLMTGTRKIKQDTIVHRPQRKKVTEVAPKRLLQEQADNSHYFSDEFQPLLNTEGSTKYVRADVSHFELKKLRRGDYSPELFLDLHGLTQQQAKQELGALIAACRREHVFCACVMHGHGKHILKQQTPLWLAQHPHIMAFHQAPKEYGGDAALLVLIEVEEWQPPELP.

Residues 98 to 173 (LDLHGLTQQQ…GDAALLVLIE (76 aa)) form the Smr domain.

It belongs to the SmrB family. As to quaternary structure, associates with collided ribosomes, but not with correctly translating polysomes.

Its function is as follows. Acts as a ribosome collision sensor. Detects stalled/collided disomes (pairs of ribosomes where the leading ribosome is stalled and a second ribosome has collided with it) and endonucleolytically cleaves mRNA at the 5' boundary of the stalled ribosome. Stalled/collided disomes form a new interface (primarily via the 30S subunits) that binds SmrB. Cleaved mRNA becomes available for tmRNA ligation, leading to ribosomal subunit dissociation and rescue of stalled ribosomes. In Klebsiella pneumoniae (strain 342), this protein is Ribosome rescue factor SmrB.